The sequence spans 295 residues: Tyrosine recombinase XerC (295 aa).

Residues 1 to 85 (MLTALNRYWD…ALRRFLSFLV (85 aa)) form the Core-binding (CB) domain. The region spanning 106–285 (HLPKNMDGEQ…NFQHLAEVYD (180 aa)) is the Tyr recombinase domain. Catalysis depends on residues arginine 145, lysine 169, histidine 237, arginine 240, and histidine 263. Tyrosine 272 functions as the O-(3'-phospho-DNA)-tyrosine intermediate in the catalytic mechanism.

It belongs to the 'phage' integrase family. XerC subfamily. In terms of assembly, forms a cyclic heterotetrameric complex composed of two molecules of XerC and two molecules of XerD.

The protein resides in the cytoplasm. Site-specific tyrosine recombinase, which acts by catalyzing the cutting and rejoining of the recombining DNA molecules. The XerC-XerD complex is essential to convert dimers of the bacterial chromosome into monomers to permit their segregation at cell division. It also contributes to the segregational stability of plasmids. In Haemophilus influenzae (strain PittEE), this protein is Tyrosine recombinase XerC.